Reading from the N-terminus, the 185-residue chain is MSGGGTETPVACDAAQGGKKRDSLGTPGAAHLIIKDLGEIHSRLLDHRPVTQGEIRYFVKEFEEKRGLRELRVLKNLENTIQETNECLLPKCRETMECGLGETLQRLQAANDSICRLQQREQERKKVINDYLTASEKRRLVQWEEFVSGQPQRRAEVDEEHRRAVERLREQYAAMEKDLAKFSTF.

The tract at residues 1-25 is disordered; the sequence is MSGGGTETPVACDAAQGGKKRDSLG. Ser2 carries the N-acetylserine modification.

It belongs to the BLOC1S5 family. Octamer composed of one copy each BLOC1S1, BLOC1S2, BLOC1S3, BLOC1S4, BLOC1S5, BLOC1S6, DTNBP1/BLOC1S7 and SNAPIN/BLOC1S8. Component of the biogenesis of lysosome-related organelles complex 1 (BLOC-1) composed of BLOC1S1, BLOC1S2, BLOC1S3, BLOC1S4, BLOC1S5, BLOC1S6, DTNBP1/BLOC1S7 and SNAPIN/BLOC1S8. The BLOC-1 complex associates with the AP-3 protein complex and membrane protein cargos. Interacts with BLOC1S4, BLOC1S6, DTNBP1/BLOC1S7 and PI4K2A. As to expression, detected in heart, brain, spleen, lung, kidney and testis.

In terms of biological role, component of the BLOC-1 complex, a complex that is required for normal biogenesis of lysosome-related organelles (LRO), such as platelet dense granules and melanosomes. In concert with the AP-3 complex, the BLOC-1 complex is required to target membrane protein cargos into vesicles assembled at cell bodies for delivery into neurites and nerve terminals. The BLOC-1 complex, in association with SNARE proteins, is also proposed to be involved in neurite extension. Plays a role in intracellular vesicle trafficking. In Mus musculus (Mouse), this protein is Biogenesis of lysosome-related organelles complex 1 subunit 5 (Bloc1s5).